Consider the following 909-residue polypeptide: ABC transporter B family member 1 (909 aa).

Residues 1-36 form a disordered region; the sequence is MTKKNFNDEENESLLETYNKQQQKQSISTTNRSDQK. A compositionally biased stretch (polar residues) spans 14–36; it reads LLETYNKQQQKQSISTTNRSDQK. A helical membrane pass occupies residues 85 to 105; sequence LFIQIVSLVILAGYLISINAL. Low complexity predominate over residues 125-134; it reads TDSGSVSPTS. The interval 125 to 147 is disordered; sequence TDSGSVSPTSTPSPTPTPTPSPT. The segment covering 135–145 has biased composition (pro residues); that stretch reads TPSPTPTPTPS. 8 helical membrane passes run 182–202, 206–226, 275–295, 347–367, 392–412, 480–500, 572–592, and 607–627; these read FSTF…LLLI, SFIY…YNVI, IIIV…VLHI, LPII…SLAM, LALV…SWLF, VILL…IVPV, GVFS…IVYV, and LTSF…ISSL. One can recognise an ABC transmembrane type-1 domain in the interval 350–633; the sequence is ILAAMVALVF…ISSLMTDFLK (284 aa). The 237-residue stretch at 666-902 folds into the ABC transporter domain; that stretch reads IELKDVEFSY…TDGIYHNLVK (237 aa). Position 701–708 (701–708) interacts with ATP; sequence GPSGGGKS.

Belongs to the ABC transporter superfamily. ABCB family.

It localises to the membrane. This Dictyostelium discoideum (Social amoeba) protein is ABC transporter B family member 1 (abcB1).